The following is a 756-amino-acid chain: Protease KEX1 (756 aa).

The N-terminal stretch at 1-24 (MILSSQLMLALIAVSGYGKAMQVP) is a signal peptide. N-linked (GlcNAc...) asparagine glycosylation is found at N121, N144, and N152. The Peptidase S8 domain occupies 130 to 440 (QWHLINPNYP…FGKLDAYNIV (311 aa)). Active-site charge relay system residues include D164 and H202. 2 disulfide bridges follow: C218/C365 and C310/C340. S373 functions as the Charge relay system in the catalytic mechanism. N392 and N538 each carry an N-linked (GlcNAc...) asparagine glycan. The 135-residue stretch at 449–583 (VNPQGWLYLP…RLKMFGETID (135 aa)) folds into the P/Homo B domain. A disordered region spans residues 599–632 (AEVKSTESKTTTPTAQTSSFTTTSGEETSGANKL). Residues 606–628 (SKTTTPTAQTSSFTTTSGEETSG) are compositionally biased toward low complexity. Residues 641 to 661 (LYLAIFVIGAIVIIIYYLFFL) traverse the membrane as a helical segment. A disordered region spans residues 715–756 (EEELSPRESSSNNPFGNESLESFDNSPDHTSNLLGQNSIPNK). The span at 721–756 (RESSSNNPFGNESLESFDNSPDHTSNLLGQNSIPNK) shows a compositional bias: polar residues.

Belongs to the peptidase S8 family. Furin subfamily. Ca(2+) serves as cofactor.

It localises to the membrane. Functionally, probably involved in the processing of the precursor of m1-toxin and alpha-factor. In Kluyveromyces lactis (strain ATCC 8585 / CBS 2359 / DSM 70799 / NBRC 1267 / NRRL Y-1140 / WM37) (Yeast), this protein is Protease KEX1 (KEX1).